The primary structure comprises 246 residues: Alpha-tubulin N-acetyltransferase (246 aa).

One can recognise an N-acetyltransferase domain in the interval 21–202 (LTLVPDGVSR…NNFVVFHSFF (182 aa)). Acetyl-CoA contacts are provided by residues 135–148 (FYVDESCQRQGYGK) and 172–181 (SNKLLGFLRK).

Belongs to the acetyltransferase ATAT1 family.

The enzyme catalyses L-lysyl-[alpha-tubulin] + acetyl-CoA = N(6)-acetyl-L-lysyl-[alpha-tubulin] + CoA + H(+). Functionally, specifically acetylates 'Lys-40' in alpha-tubulin on the lumenal side of microtubules. Promotes microtubule destabilization and accelerates microtubule dynamics; this activity may be independent of acetylation activity. Acetylates alpha-tubulin with a slow enzymatic rate, due to a catalytic site that is not optimized for acetyl transfer. Enters the microtubule through each end and diffuses quickly throughout the lumen of microtubules. Acetylates only long/old microtubules because of its slow acetylation rate since it does not have time to act on dynamically unstable microtubules before the enzyme is released. This chain is Alpha-tubulin N-acetyltransferase, found in Leishmania infantum.